Reading from the N-terminus, the 461-residue chain is Alkaline phosphatase 4 (461 aa).

The N-terminal stretch at 1 to 41 (MKKMSLFQNMKSKLLPIAAVSVLTAGIFAGAELQQTEKASA) is a signal peptide. D58 is a binding site for Mg(2+). D58 contacts Zn(2+). The active-site Phosphoserine intermediate is the S108. Mg(2+) is bound by residues T161 and E282. Residues D287, H291, D329, H330, and H423 each coordinate Zn(2+).

This sequence belongs to the alkaline phosphatase family. Monomer. Mg(2+) is required as a cofactor. The cofactor is Zn(2+).

The enzyme catalyses a phosphate monoester + H2O = an alcohol + phosphate. The sequence is that of Alkaline phosphatase 4 (phoA) from Bacillus subtilis (strain 168).